Here is a 639-residue protein sequence, read N- to C-terminus: Tetracycline resistance protein TetM from transposon Tn5251 (639 aa).

In terms of domain architecture, tr-type G spans 1 to 242; sequence MKIINIGVLA…VITNKFYSST (242 aa). GTP is bound by residues 10 to 17, 74 to 78, and 128 to 131; these read AHVDAGKT, DTPGH, and NKID.

Belongs to the TRAFAC class translation factor GTPase superfamily. Classic translation factor GTPase family. TetM/TetO subfamily.

In terms of biological role, abolishes the inhibitory effect of tetracyclin on protein synthesis by a non-covalent modification of the ribosomes. This Streptococcus pneumoniae protein is Tetracycline resistance protein TetM from transposon Tn5251 (tetM(5251)).